A 203-amino-acid chain; its full sequence is Small ribosomal subunit protein uS7B (203 aa).

It belongs to the universal ribosomal protein uS7 family. As to quaternary structure, component of the small ribosomal subunit (SSU). Mature yeast ribosomes consist of a small (40S) and a large (60S) subunit. The 40S small subunit contains 1 molecule of ribosomal RNA (18S rRNA) and at least 33 different proteins. The large 60S subunit contains 3 rRNA molecules (25S, 5.8S and 5S rRNA) and at least 46 different proteins.

The protein resides in the cytoplasm. Component of the ribosome, a large ribonucleoprotein complex responsible for the synthesis of proteins in the cell. The small ribosomal subunit (SSU) binds messenger RNAs (mRNAs) and translates the encoded message by selecting cognate aminoacyl-transfer RNA (tRNA) molecules. The large subunit (LSU) contains the ribosomal catalytic site termed the peptidyl transferase center (PTC), which catalyzes the formation of peptide bonds, thereby polymerizing the amino acids delivered by tRNAs into a polypeptide chain. The nascent polypeptides leave the ribosome through a tunnel in the LSU and interact with protein factors that function in enzymatic processing, targeting, and the membrane insertion of nascent chains at the exit of the ribosomal tunnel. This chain is Small ribosomal subunit protein uS7B (rps502), found in Schizosaccharomyces pombe (strain 972 / ATCC 24843) (Fission yeast).